The sequence spans 868 residues: Alanine--tRNA ligase (868 aa).

Zn(2+) is bound by residues His-553, His-557, Cys-657, and His-661. Residues Gly-831–Leu-851 form a disordered region.

The protein belongs to the class-II aminoacyl-tRNA synthetase family. The cofactor is Zn(2+).

Its subcellular location is the cytoplasm. The catalysed reaction is tRNA(Ala) + L-alanine + ATP = L-alanyl-tRNA(Ala) + AMP + diphosphate. In terms of biological role, catalyzes the attachment of alanine to tRNA(Ala) in a two-step reaction: alanine is first activated by ATP to form Ala-AMP and then transferred to the acceptor end of tRNA(Ala). Also edits incorrectly charged Ser-tRNA(Ala) and Gly-tRNA(Ala) via its editing domain. This Chromohalobacter salexigens (strain ATCC BAA-138 / DSM 3043 / CIP 106854 / NCIMB 13768 / 1H11) protein is Alanine--tRNA ligase.